The chain runs to 1595 residues: Collagen-like protein 2 (1595 aa).

N-linked (GlcNAc...) asparagine; by host glycosylation is found at Asn-87 and Asn-134. Collagen-like domains are found at residues 97 to 155 (LRGE…NGDV), 175 to 233 (QVGL…KGEG), 236 to 295 (GSKG…KGDI), and 299 to 358 (GIKG…KGMK). Residues 181-190 (SQGDQGYKGD) show a composition bias toward low complexity. 2 disordered regions span residues 181–577 (SQGD…SPDL) and 604–1326 (TDIK…GIKG). Basic and acidic residues-rich tracts occupy residues 191–200 (QGSKGDKGQK), 209–448 (KGDK…KGTK), 456–466 (YKGDIGDKGIK), 474–501 (DKGD…DKGY), 510–561 (DNGE…DKGE), 606–615 (IKGEKGDKGE), 622–702 (KGDK…DKGD), 718–825 (KGDK…DKGI), 832–883 (KGDK…KGFK), 895–1041 (KGDK…DKGI), 1048–1098 (KGNK…DQGT), 1107–1151 (KGDK…KGIK), 1159–1250 (NKGD…KGDQ), and 1265–1300 (KGDK…DQGI). Asn-274, Asn-280, and Asn-286 each carry an N-linked (GlcNAc...) asparagine; by host glycan. Asn-373, Asn-382, Asn-400, and Asn-409 each carry an N-linked (GlcNAc...) asparagine; by host glycan. Collagen-like domains follow at residues 380 to 559 (GDNG…KGDK), 608 to 907 (GEKG…KGEN), 920 to 1039 (GDKG…KGDK), 1043 to 1102 (GTNG…KGET), and 1128 to 1307 (GDQG…SGAS). N-linked (GlcNAc...) asparagine; by host glycans are attached at residues Asn-1345, Asn-1420, and Asn-1545. The tract at residues 1538 to 1585 (SAFDKGGNGSIRFNPPSSGTKGSGGGGSVQGGGGTIPNDGYPGGNGGP) is disordered. The span at 1558 to 1585 (KGSGGGGSVQGGGGTIPNDGYPGGNGGP) shows a compositional bias: gly residues.

In terms of processing, may be hydroxylated on lysine by the viral-encoded procollagen-lysine,2-oxoglutarate 5-dioxygenase.

Its subcellular location is the virion. In terms of biological role, may participate in the formation of a layer of cross-linked glycosylated fibrils at the viral surface thus giving it a hairy-like appearance. The protein is Collagen-like protein 2 of Acanthamoeba polyphaga (Amoeba).